The chain runs to 186 residues: Large ribosomal subunit protein uL5 (186 aa).

Belongs to the universal ribosomal protein uL5 family. In terms of assembly, part of the 50S ribosomal subunit; part of the 5S rRNA/L5/L18/L25 subcomplex. Contacts the 5S rRNA and the P site tRNA. Forms a bridge to the 30S subunit in the 70S ribosome.

Functionally, this is one of the proteins that bind and probably mediate the attachment of the 5S RNA into the large ribosomal subunit, where it forms part of the central protuberance. In the 70S ribosome it contacts protein S13 of the 30S subunit (bridge B1b), connecting the 2 subunits; this bridge is implicated in subunit movement. Contacts the P site tRNA; the 5S rRNA and some of its associated proteins might help stabilize positioning of ribosome-bound tRNAs. In Karelsulcia muelleri (strain GWSS) (Sulcia muelleri), this protein is Large ribosomal subunit protein uL5.